The primary structure comprises 861 residues: Linoleate 9S-lipoxygenase 2 (861 aa).

One can recognise a PLAT domain in the interval asparagine 29–valine 160. The 699-residue stretch at proline 163–isoleucine 861 folds into the Lipoxygenase domain. Positions glutamate 212 to serine 246 are disordered. Fe cation-binding residues include histidine 522, histidine 527, histidine 713, asparagine 717, and isoleucine 861.

This sequence belongs to the lipoxygenase family. In terms of assembly, monomer. It depends on Fe cation as a cofactor. In terms of tissue distribution, highly expressed in tubers and roots. Detected in flower buds and leaves.

The protein localises to the cytoplasm. It catalyses the reaction (9Z,12Z)-octadecadienoate + O2 = (9S)-hydroperoxy-(10E,12Z)-octadecadienoate. The protein operates within lipid metabolism; oxylipin biosynthesis. Plant lipoxygenases may be involved in a number of diverse aspects of plant physiology including growth and development, pest resistance, and senescence or responses to wounding. Catalyzes the hydroperoxidation of lipids containing a cis,cis-1,4-pentadiene structure. Linoleic acid is the preferred substrate, but is also active with linolenic and arachidonic acids. In Solanum tuberosum (Potato), this protein is Linoleate 9S-lipoxygenase 2 (LOX1.2).